The chain runs to 168 residues: Thiol peroxidase (168 aa).

In terms of domain architecture, Thioredoxin spans 20–168; the sequence is PAVGSQLPAF…DYDKALAALA (149 aa). C62 functions as the Cysteine sulfenic acid (-SOH) intermediate in the catalytic mechanism. The cysteines at positions 62 and 96 are disulfide-linked.

The protein belongs to the peroxiredoxin family. Tpx subfamily. Homodimer.

It catalyses the reaction a hydroperoxide + [thioredoxin]-dithiol = an alcohol + [thioredoxin]-disulfide + H2O. In terms of biological role, thiol-specific peroxidase that catalyzes the reduction of hydrogen peroxide and organic hydroperoxides to water and alcohols, respectively. Plays a role in cell protection against oxidative stress by detoxifying peroxides. This chain is Thiol peroxidase, found in Chlorobaculum tepidum (strain ATCC 49652 / DSM 12025 / NBRC 103806 / TLS) (Chlorobium tepidum).